A 459-amino-acid polypeptide reads, in one-letter code: Mitochondrial distribution and morphology protein 10 (459 aa).

This sequence belongs to the MDM10 family. As to quaternary structure, component of the ER-mitochondria encounter structure (ERMES) or MDM complex, composed of MMM1, MDM10, MDM12 and MDM34. Associates with the mitochondrial outer membrane sorting assembly machinery SAM(core) complex.

The protein localises to the mitochondrion outer membrane. Functionally, component of the ERMES/MDM complex, which serves as a molecular tether to connect the endoplasmic reticulum and mitochondria. Components of this complex are involved in the control of mitochondrial shape and protein biogenesis and may function in phospholipid exchange. MDM10 is involved in the late assembly steps of the general translocase of the mitochondrial outer membrane (TOM complex). Functions in the TOM40-specific route of the assembly of outer membrane beta-barrel proteins, including the association of TOM40 with the receptor TOM22 and small TOM proteins. Can associate with the SAM(core) complex as well as the MDM12-MMM1 complex, both involved in late steps of the major beta-barrel assembly pathway, that is responsible for biogenesis of all outer membrane beta-barrel proteins. May act as a switch that shuttles between both complexes and channels precursor proteins into the TOM40-specific pathway. Plays a role in mitochondrial morphology and in the inheritance of mitochondria. This Clavispora lusitaniae (strain ATCC 42720) (Yeast) protein is Mitochondrial distribution and morphology protein 10.